The chain runs to 313 residues: Probable alpha-L-glutamate ligase (313 aa).

The ATP-grasp domain occupies 112 to 294 (LQMLMAQGIA…IALQMIVHLE (183 aa)). Residues Lys-148, 185–186 (EF), Asp-194, and 218–220 (RAN) each bind ATP. Residues Asp-255, Glu-267, and Asn-269 each contribute to the Mg(2+) site. Mn(2+)-binding residues include Asp-255, Glu-267, and Asn-269.

The protein belongs to the RimK family. Mg(2+) is required as a cofactor. It depends on Mn(2+) as a cofactor.

This Pasteurella multocida (strain Pm70) protein is Probable alpha-L-glutamate ligase.